A 303-amino-acid chain; its full sequence is Polyisoprenyl-teichoic acid--peptidoglycan teichoic acid transferase TagU (303 aa).

Topologically, residues 1–6 are cytoplasmic; the sequence is MSKGKK. A helical; Signal-anchor for type II membrane protein transmembrane segment spans residues 7 to 27; the sequence is IFAIIFGIILVLFLAVVGMGA. Topologically, residues 28–303 are extracellular; that stretch reads KLYWDVSKSM…QELKNQLNTK (276 aa).

It belongs to the LytR/CpsA/Psr (LCP) family.

It is found in the cell membrane. It participates in cell wall biogenesis. In terms of biological role, may catalyze the final step in cell wall teichoic acid biosynthesis, the transfer of the anionic cell wall polymers (APs) from their lipid-linked precursor to the cell wall peptidoglycan (PG). The chain is Polyisoprenyl-teichoic acid--peptidoglycan teichoic acid transferase TagU from Enterococcus faecalis (strain ATCC 700802 / V583).